We begin with the raw amino-acid sequence, 984 residues long: Ephrin type-B receptor 1 (984 aa).

Positions 1–17 (MALDCLLLFLLASAVAA) are cleaved as a signal peptide. Residues 18 to 540 (MEETLMDTRT…YKSELREQLP (523 aa)) are Extracellular-facing. In terms of domain architecture, Eph LBD spans 19-201 (EETLMDTRTA…FFKKCPSIVQ (183 aa)). 2 consecutive Fibronectin type-III domains span residues 322-432 (VPSG…TNQA) and 433-528 (APST…TLTD). Residues asparagine 334, asparagine 426, and asparagine 480 are each glycosylated (N-linked (GlcNAc...) asparagine). A helical membrane pass occupies residues 541–563 (LIAGSAAAGVVFVVSLVAISIVC). The Cytoplasmic segment spans residues 564 to 984 (SRKRAYSKEA…QMNQSPSVMA (421 aa)). Residue tyrosine 600 is modified to Phosphotyrosine. Residues 619-882 (VKIEEVIGAG…EIVNTLDKMI (264 aa)) enclose the Protein kinase domain. ATP-binding positions include 625-633 (IGAGEFGEV) and lysine 651. The active-site Proton acceptor is the aspartate 744. An SAM domain is found at 911–975 (TAFTTVDDWL…LSSIHSMRVQ (65 aa)). Position 928 is a phosphotyrosine; by autocatalysis (tyrosine 928). The short motif at 982-984 (VMA) is the PDZ-binding element.

The protein belongs to the protein kinase superfamily. Tyr protein kinase family. Ephrin receptor subfamily. In terms of assembly, heterotetramer upon binding of the ligand. The heterotetramer is composed of an ephrin dimer and a receptor dimer. Oligomerization is probably required to induce biological responses. Interacts with EPHB6; transphosphorylates EPHB6 to form an active signaling complex. Interacts with PICK1. Interacts (through Tyr-594) with NCK1 (via SH2 domain); activates the JUN cascade to regulate cell adhesion. The ligand-activated form interacts (through Tyr-928) with GRB7 and GRB10 (via SH2 domains). The ligand-activated form interacts (residues within the catalytic domain) with GRB2 (via SH2 domain). Interacts with GRB2, SHC1 and SRC; activates the MAPK/ERK cascade to regulate cell migration. Interacts with CBL; regulates receptor degradation through ubiquitination. Interacts with ACP1. In terms of processing, phosphorylated. Autophosphorylation is stimulated by the ligand EFNB1. Required for interaction with SH2 domain-containing interactors, for activation of the MAPK/ERK and JUN signaling cascades and for ubiquitination by CBL. Post-translationally, ubiquitinated; (EFNB1)ligand-induced poly- and/or multi-ubiquitination by CBL is regulated by SRC and leads to lysosomal degradation. In terms of tissue distribution, restricted to brain and testes.

The protein localises to the cell membrane. The protein resides in the early endosome membrane. It localises to the cell projection. It is found in the dendrite. It catalyses the reaction L-tyrosyl-[protein] + ATP = O-phospho-L-tyrosyl-[protein] + ADP + H(+). In terms of biological role, receptor tyrosine kinase which binds promiscuously transmembrane ephrin-B family ligands residing on adjacent cells, leading to contact-dependent bidirectional signaling into neighboring cells. The signaling pathway downstream of the receptor is referred to as forward signaling while the signaling pathway downstream of the ephrin ligand is referred to as reverse signaling. Cognate/functional ephrin ligands for this receptor include EFNB1, EFNB2 and EFNB3. During nervous system development, regulates retinal axon guidance redirecting ipsilaterally ventrotemporal retinal ganglion cells axons at the optic chiasm midline. This probably requires repulsive interaction with EFNB2. In the adult nervous system together with EFNB3, regulates chemotaxis, proliferation and polarity of the hippocampus neural progenitors. In addition to its role in axon guidance also plays an important redundant role with other ephrin-B receptors in development and maturation of dendritic spines and synapse formation. May also regulate angiogenesis. More generally, may play a role in targeted cell migration and adhesion. Upon activation by EFNB1 and probably other ephrin-B ligands activates the MAPK/ERK and the JNK signaling cascades to regulate cell migration and adhesion respectively. Involved in the maintenance of the pool of satellite cells (muscle stem cells) by promoting their self-renewal and reducing their activation and differentiation. The polypeptide is Ephrin type-B receptor 1 (Ephb1) (Rattus norvegicus (Rat)).